Here is a 290-residue protein sequence, read N- to C-terminus: 4-hydroxybenzoate octaprenyltransferase (290 aa).

A run of 8 helical transmembrane segments spans residues 21 to 41, 44 to 64, 97 to 117, 143 to 163, 168 to 188, 211 to 231, 235 to 255, and 270 to 290; these read IGTM…ADGM, LRVL…GCII, LFVV…PLVV, FLGV…TGEV, WWLF…YAMV, EIIG…GWSG, LLYG…QRLI, and NNWA…FAAL.

This sequence belongs to the UbiA prenyltransferase family. Requires Mg(2+) as cofactor.

The protein localises to the cell inner membrane. The enzyme catalyses all-trans-octaprenyl diphosphate + 4-hydroxybenzoate = 4-hydroxy-3-(all-trans-octaprenyl)benzoate + diphosphate. The protein operates within cofactor biosynthesis; ubiquinone biosynthesis. In terms of biological role, catalyzes the prenylation of para-hydroxybenzoate (PHB) with an all-trans polyprenyl group. Mediates the second step in the final reaction sequence of ubiquinone-8 (UQ-8) biosynthesis, which is the condensation of the polyisoprenoid side chain with PHB, generating the first membrane-bound Q intermediate 3-octaprenyl-4-hydroxybenzoate. In Shewanella amazonensis (strain ATCC BAA-1098 / SB2B), this protein is 4-hydroxybenzoate octaprenyltransferase.